A 252-amino-acid chain; its full sequence is Endonuclease NucS (252 aa).

The protein belongs to the NucS endonuclease family.

The protein resides in the cytoplasm. Cleaves both 3' and 5' ssDNA extremities of branched DNA structures. This chain is Endonuclease NucS, found in Sulfurisphaera tokodaii (strain DSM 16993 / JCM 10545 / NBRC 100140 / 7) (Sulfolobus tokodaii).